A 1297-amino-acid chain; its full sequence is MTVKTFRGSPALSEFRLTQLQQKCQQYQLPITSVYAEYLHFVEQKTSLVEDEIVKLQALLHYGSMFSELKPAGYCLIVTPRVGTISSWSSKATDIAHNCGLSKVNRIERGIAYYFNIERDLTEAELATLKDLLHDRMLETVLNHETEAALLFTQQEPKALTTIDILNGGRQALEQANIALGLALADDEMDYLVESFTALKRNPQDVELYMFAQANSEHCRHKIFNADWIIDGKKQDKSLFKMIKNTFEQTPDFVLSAYKDNAAVMEGSKVGRWFPDPDGQYRVHQEDVHILMKVETHNHPTAISPFPGAATGSGGEIRDEGATGRGAKPKAGLTGFSVSNLVIPNFEQPWENPLSKPNRIASALDIMIDAPLGSAAFNNEFGRPALLGYFRTYEEKVNSFAGKEVRGYHKPIMLAGGIGNIRGEQVQKGEIPIGAKLIVLGGAAMNIGLGGGAASSMDSGKSKEDLDFASVQRENPEMERRCQEVIDRCWQLGEENPILFIHDVGAGGLSNAMPELVHDGKRGGKFDLRSILCDEKGMSPLEIWCNESQERYVLAVAPENLELFTALCERERAPFAVIGEATQAEHLILHDSHFDNNPIDLPMNVLLGKTPKMTREVLSKTVENQSLKIESIQLKEAFHRVLRLPVVAEKTFLITIGDRSVTGMVARDQMVGPWQIPVSDVAVTTASLDSYHGEAMAIGERSPVALLDFSASARLAVAEAITNIAGTLIGEMKRIKLSANWMSAAGHTGEDAGLYEAVKAVGEELCPALGLTIPVGKDSMSMKTTWIDNGEQKSVTAPLSLVISAFARVEDVRKTLTPQLRTDKGFSSLLLIDLGEGHNRLGATALAQVYKQLGDKPADVVKVQRLKDFYNAMQTLVAEDKLLAYHDRSDGGLITTLAEMAFAGHCGVEVDISALGDNDLAVLFNEELGAVIQVADSQLESVREVLKAHNLLGIIHQLGTVTADDRFEISRGSHKLFSEKRSELRSIWAELTYQMQRLRDNPECAEQEFEAKKNPDDKGLSAFLTYDVNEDITAPFINKGVKPTIAILREQGVNSHYEMAAAFDRAGFNAIDVHMSDLMIGRRNLAEFNAMVACGGFSYGDVLGAGGGWAKSILFNPKLHEQFSQFFINPNTLTLGVCNGCQMISNLAEIIPGTENWPHFVRNKSERFEARVSLVKINEVDSVWFAGMAGSHMPIAVSHGEGQVKFKSVEQFAGLKAQGIIAAQYIDNNGSPTELYPANPNGSSEGITAITNLDGRVAIMMPHPERVFRAVSNSWHPENWTEDGAWMRLFRNARMVF.

The interval 301–329 (TAISPFPGAATGSGGEIRDEGATGRGAKP) is disordered. Position 308-319 (308-319 (GAATGSGGEIRD)) interacts with ATP. Mg(2+)-binding residues include aspartate 680, glutamate 719, asparagine 723, and aspartate 887. Serine 889 is an ATP binding site. A Glutamine amidotransferase type-1 domain is found at 1045 to 1297 (IAILREQGVN…RLFRNARMVF (253 aa)). The active-site Nucleophile is cysteine 1138. Residues histidine 1263 and glutamate 1265 contribute to the active site.

This sequence in the N-terminal section; belongs to the FGAMS family. As to quaternary structure, monomer.

The protein localises to the cytoplasm. The catalysed reaction is N(2)-formyl-N(1)-(5-phospho-beta-D-ribosyl)glycinamide + L-glutamine + ATP + H2O = 2-formamido-N(1)-(5-O-phospho-beta-D-ribosyl)acetamidine + L-glutamate + ADP + phosphate + H(+). Its pathway is purine metabolism; IMP biosynthesis via de novo pathway; 5-amino-1-(5-phospho-D-ribosyl)imidazole from N(2)-formyl-N(1)-(5-phospho-D-ribosyl)glycinamide: step 1/2. In terms of biological role, phosphoribosylformylglycinamidine synthase involved in the purines biosynthetic pathway. Catalyzes the ATP-dependent conversion of formylglycinamide ribonucleotide (FGAR) and glutamine to yield formylglycinamidine ribonucleotide (FGAM) and glutamate. In Haemophilus influenzae (strain ATCC 51907 / DSM 11121 / KW20 / Rd), this protein is Phosphoribosylformylglycinamidine synthase.